A 131-amino-acid chain; its full sequence is Small ribosomal subunit protein uS12 (131 aa).

Asp89 bears the 3-methylthioaspartic acid mark. Residues 106-131 are disordered; it reads GVDGRKQGRSKYGAKKAKVAKTASAK. The span at 112 to 124 shows a compositional bias: basic residues; the sequence is QGRSKYGAKKAKV.

The protein belongs to the universal ribosomal protein uS12 family. Part of the 30S ribosomal subunit. Contacts proteins S8 and S17. May interact with IF1 in the 30S initiation complex.

In terms of biological role, with S4 and S5 plays an important role in translational accuracy. Interacts with and stabilizes bases of the 16S rRNA that are involved in tRNA selection in the A site and with the mRNA backbone. Located at the interface of the 30S and 50S subunits, it traverses the body of the 30S subunit contacting proteins on the other side and probably holding the rRNA structure together. The combined cluster of proteins S8, S12 and S17 appears to hold together the shoulder and platform of the 30S subunit. The protein is Small ribosomal subunit protein uS12 of Endomicrobium trichonymphae.